The following is a 295-amino-acid chain: Voltage-gated potassium channel (295 aa).

The Cytoplasmic segment spans residues 1-38; sequence MSVERWVFPGCSVMARFRRGLSDLGGRVRNIGDVMEHP. Residues 39–63 traverse the membrane as a helical segment; it reads LVELGVSYAALLSVIVVVVEYTMQL. The Extracellular segment spans residues 64-67; sequence SGEY. Residues 68–92 form a helical membrane-spanning segment; it reads LVRLYLVDLILVIILWADYAYRAYK. Residues 93-96 lie on the Cytoplasmic side of the membrane; the sequence is SGDP. Residues 97-105 constitute an intramembrane region (helical); it reads AGYVKKTLY. The Extracellular portion of the chain corresponds to 106-108; it reads EIP. Residues 109–125 traverse the membrane as a helical; Voltage-sensor segment; the sequence is ALVPAGLLALIEGHLAG. Residues 126-128 are Cytoplasmic-facing; the sequence is LGL. The helical; Voltage-sensor transmembrane segment at 129-145 threads the bilayer; the sequence is FRLVRLLRFLRILLIIS. The Cytoplasmic segment spans residues 146-159; the sequence is RGSKFLSAIADAAD. The chain crosses the membrane as a helical span at residues 160-184; that stretch reads KIRFYHLFGAVMLTVLYGAFAIYIV. The Extracellular portion of the chain corresponds to 185 to 195; that stretch reads EYPDPNSSIKS. Residues 196 to 208 constitute an intramembrane region (pore-forming); that stretch reads VFDALWWAVVTAT. Residues 209-214 carry the Selectivity filter motif; that stretch reads TVGYGD. At 209–221 the chain is on the extracellular side; the sequence is TVGYGDVVPATPI. The helical transmembrane segment at 222–253 threads the bilayer; that stretch reads GKVIGIAVMLTGISALTLLIGTVSNMFQKILV. Residues 254–295 lie on the Cytoplasmic side of the membrane; sequence GEPEPSCSPAKLAEMVSSMSEEEFEEFVRTLKNLRRLENSMK.

The protein belongs to the potassium channel family.

It localises to the cell membrane. Functionally, mediates a strong voltage-dependent potassium ion permeability of excitable membranes. Assuming opened or closed conformations in response to the voltage difference across the membrane, the protein forms a potassium-selective channel through which potassium ions may pass in accordance with their electrochemical gradient. This Aeropyrum pernix (strain ATCC 700893 / DSM 11879 / JCM 9820 / NBRC 100138 / K1) protein is Voltage-gated potassium channel.